Reading from the N-terminus, the 86-residue chain is Anti-adapter protein IraP (86 aa).

Residues 1–42 (MKNLIAELLVKLAQKEEESKELVAQVEALEIVVTALLRQMAQ) are a coiled coil.

Belongs to the IraP family. In terms of assembly, interacts with RssB.

It localises to the cytoplasm. Functionally, inhibits RpoS proteolysis by regulating RssB activity, thereby increasing the stability of the sigma stress factor RpoS especially during phosphate starvation, but also in stationary phase and during nitrogen starvation. Its effect on RpoS stability is due to its interaction with RssB, which probably blocks the interaction of RssB with RpoS, and the consequent delivery of the RssB-RpoS complex to the ClpXP protein degradation pathway. The chain is Anti-adapter protein IraP from Enterobacter sp. (strain 638).